The following is a 301-amino-acid chain: Asialoglycoprotein receptor 2 (301 aa).

The segment at 1 to 43 (MEKDCQDIQQLDSEENDHQLSGDDEHGSHVQDPRIENPHWKGQ) is disordered. Residues 1–58 (MEKDCQDIQQLDSEENDHQLSGDDEHGSHVQDPRIENPHWKGQPLSRPFPQRLCSTFR) lie on the Cytoplasmic side of the membrane. At S13 the chain carries Phosphoserine. Positions 16 to 39 (NDHQLSGDDEHGSHVQDPRIENPH) are enriched in basic and acidic residues. Residue C54 is the site of S-palmitoyl cysteine attachment. Residues 59–79 (LSLLALAFNILLLVVICVVSS) traverse the membrane as a helical; Signal-anchor for type II membrane protein segment. Residues 80–301 (QSIQLQEEFR…VCEKRRNITH (222 aa)) lie on the Extracellular side of the membrane. N-linked (GlcNAc...) asparagine glycans are attached at residues N97 and N165. The region spanning 169–295 (CCPVNWVEFG…QQVNRWVCEK (127 aa)) is the C-type lectin domain. Intrachain disulfides connect C170–C181, C198–C293, and C271–C285. N298 carries an N-linked (GlcNAc...) asparagine glycan.

In terms of assembly, interacts with LASS2. Expressed exclusively in hepatic parenchymal cells.

The protein resides in the membrane. Mediates the endocytosis of plasma glycoproteins to which the terminal sialic acid residue on their complex carbohydrate moieties has been removed. The receptor recognizes terminal galactose and N-acetylgalactosamine units. After ligand binding to the receptor, the resulting complex is internalized and transported to a sorting organelle, where receptor and ligand are disassociated. The receptor then returns to the cell membrane surface. This is Asialoglycoprotein receptor 2 (Asgr2) from Mus musculus (Mouse).